Reading from the N-terminus, the 387-residue chain is Phosphoglycerate kinase (387 aa).

Substrate is bound by residues 21 to 23 (DLN), Arg36, 59 to 62 (HLGR), Arg113, and Arg146. Residues Lys197, Glu314, and 340 to 343 (GGDT) contribute to the ATP site.

It belongs to the phosphoglycerate kinase family. Monomer.

The protein localises to the cytoplasm. The enzyme catalyses (2R)-3-phosphoglycerate + ATP = (2R)-3-phospho-glyceroyl phosphate + ADP. It functions in the pathway carbohydrate degradation; glycolysis; pyruvate from D-glyceraldehyde 3-phosphate: step 2/5. The polypeptide is Phosphoglycerate kinase (Enterobacter sp. (strain 638)).